A 226-amino-acid chain; its full sequence is UPF0758 protein Spy49_0870 (226 aa).

The MPN domain occupies 103–225; the sequence is SVLTSVQVAE…YYSFREKSTL (123 aa). Positions 174, 176, and 187 each coordinate Zn(2+). Residues 174–187 carry the JAMM motif motif; sequence HNHPSGNIEPSSND.

Belongs to the UPF0758 family.

This is UPF0758 protein Spy49_0870 from Streptococcus pyogenes serotype M49 (strain NZ131).